The sequence spans 445 residues: DNA repair protein RadA (445 aa).

The segment at 10–27 (CSNCANISNKWSGQCFDC) adopts a C4-type zinc-finger fold. ATP is bound at residue 90 to 97 (GEPGIGKS). The RadA KNRFG motif signature appears at 249-253 (KNRFG). Positions 348–445 (EIYLSIAGGL…HLQELKEIIK (98 aa)) are lon-protease-like.

Belongs to the RecA family. RadA subfamily.

Functionally, DNA-dependent ATPase involved in processing of recombination intermediates, plays a role in repairing DNA breaks. Stimulates the branch migration of RecA-mediated strand transfer reactions, allowing the 3' invading strand to extend heteroduplex DNA faster. Binds ssDNA in the presence of ADP but not other nucleotides, has ATPase activity that is stimulated by ssDNA and various branched DNA structures, but inhibited by SSB. Does not have RecA's homology-searching function. In Rickettsia prowazekii (strain Madrid E), this protein is DNA repair protein RadA.